A 398-amino-acid polypeptide reads, in one-letter code: Carboxyaminopropylagmatine dehydrogenase (398 aa).

It belongs to the saccharopine dehydrogenase family.

It carries out the reaction N(1)-[(S)-3-amino-3-carboxypropyl]agmatine + NADP(+) + H2O = L-aspartate 4-semialdehyde + agmatine + NADPH + H(+). It participates in amine and polyamine biosynthesis; spermidine biosynthesis. Dehydrogenase involved in the biosynthesis of spermidine via the carboxyaminopropylagmatine (CAPA) pathway. Catalyzes the reductive condensation of agmatine and L-aspartate-beta-semialdehyde (ASA) into CAPA. Shows activity toward putrescine and 1,3-diaminopropane, but the catalytic efficiency is three to four orders of magnitude lower than that for agmatine. Cannot use cadaverine or spermidine. The protein is Carboxyaminopropylagmatine dehydrogenase of Synechocystis sp. (strain ATCC 27184 / PCC 6803 / Kazusa).